Reading from the N-terminus, the 215-residue chain is ATP phosphoribosyltransferase (215 aa).

Belongs to the ATP phosphoribosyltransferase family. Short subfamily. In terms of assembly, heteromultimer composed of HisG and HisZ subunits.

It is found in the cytoplasm. The enzyme catalyses 1-(5-phospho-beta-D-ribosyl)-ATP + diphosphate = 5-phospho-alpha-D-ribose 1-diphosphate + ATP. It participates in amino-acid biosynthesis; L-histidine biosynthesis; L-histidine from 5-phospho-alpha-D-ribose 1-diphosphate: step 1/9. Catalyzes the condensation of ATP and 5-phosphoribose 1-diphosphate to form N'-(5'-phosphoribosyl)-ATP (PR-ATP). Has a crucial role in the pathway because the rate of histidine biosynthesis seems to be controlled primarily by regulation of HisG enzymatic activity. The sequence is that of ATP phosphoribosyltransferase from Cyanothece sp. (strain PCC 7425 / ATCC 29141).